A 314-amino-acid polypeptide reads, in one-letter code: Ribosomal RNA small subunit methyltransferase H (314 aa).

Residues 34–36 (GGH), Asp-53, Phe-82, Asp-103, and Gln-110 contribute to the S-adenosyl-L-methionine site.

Belongs to the methyltransferase superfamily. RsmH family.

It localises to the cytoplasm. It catalyses the reaction cytidine(1402) in 16S rRNA + S-adenosyl-L-methionine = N(4)-methylcytidine(1402) in 16S rRNA + S-adenosyl-L-homocysteine + H(+). In terms of biological role, specifically methylates the N4 position of cytidine in position 1402 (C1402) of 16S rRNA. In Limosilactobacillus fermentum (strain NBRC 3956 / LMG 18251) (Lactobacillus fermentum), this protein is Ribosomal RNA small subunit methyltransferase H.